A 129-amino-acid polypeptide reads, in one-letter code: Small ribosomal subunit protein uS9 (129 aa).

Belongs to the universal ribosomal protein uS9 family.

In Pelodictyon phaeoclathratiforme (strain DSM 5477 / BU-1), this protein is Small ribosomal subunit protein uS9.